A 173-amino-acid polypeptide reads, in one-letter code: Large ribosomal subunit protein bL9 (173 aa).

It belongs to the bacterial ribosomal protein bL9 family.

Functionally, binds to the 23S rRNA. The polypeptide is Large ribosomal subunit protein bL9 (Rickettsia bellii (strain OSU 85-389)).